Consider the following 447-residue polypeptide: Exodeoxyribonuclease 7 large subunit (447 aa).

The protein belongs to the XseA family. Heterooligomer composed of large and small subunits.

Its subcellular location is the cytoplasm. It carries out the reaction Exonucleolytic cleavage in either 5'- to 3'- or 3'- to 5'-direction to yield nucleoside 5'-phosphates.. Functionally, bidirectionally degrades single-stranded DNA into large acid-insoluble oligonucleotides, which are then degraded further into small acid-soluble oligonucleotides. The protein is Exodeoxyribonuclease 7 large subunit of Thioalkalivibrio sulfidiphilus (strain HL-EbGR7).